The primary structure comprises 1157 residues: MNSIDAVVRYSPLRNNLCNLPSAITTMLFSADFNIQQIIVELSWVPHQRAAQRRIAYCGWAGGITKTSSSNPVIEIDRSLASAIDLQENVNVTVNVHIDAVKAITVELEPVTSNDWEIVETHAQVLETYLLNQTRCVYPNQVLVVYPTPQTTARLLVKKIEPEVSTFAQLFNDTEVQIAPKVQKRPSISSVRSDSSGHRIRRVRSSTSTATGRRSVTNNGEVLPSMLRRSITLPNNTYAHVNDSKSGGYKVYCNLNELIPALQNAHFVSVSVLVGPGTPDRTGLTSSKIKQLNDSIDQAAQTQTNAAGSSHPPESSYTETGKVIAELVHDSKSPKGNVGLSELLACSLGIENTVGNLISLEQARKPLIKKPTVLVLHKYTTVSPASLDRVTIKHATEEQKRVQNKKERDTLLTQLMQLLSPLLDSCTFTNCVKLPKIGTLLPNGGLLQFKRIKSGWTTPLGKDNVSLEIGEEILRPESFSPSYDLLPDRKTHVRTQSDQYPTAQENLIESLSKIASGGSLLFGTSGSGKSLVISQVAQIVTNKGHFVKLLNCDKIMSESYNNLRGIFEDIFSEVSWKAPSLLILEDLDSLIPAEQEHSDSSQSRQLSEYFISKLSAQTINRDITILASSKSKESLNSLIFTTHLIEHDFQLRAPDKEARKQILQSYLDTLNVFCSEGELLNNIAVETEGYLPKDLKVLCDRAYHDLISRDILADSDSELDIEESSTPILNGSVGDIANKQSEIENGISGLELTNNSSSTIAVDKHGATIQKDNFDSALSGYIPQSLRGVKLQKSDVRWDDIGGLRDAKSILLETLEWPTKYAPIFSSCPLRLRSGILLYGYPGCGKTLLASAVAAQCGLNFISIKGPEILNKYIGPSEQSVRELFERAQAAKPCILFFDEFDSIAPKRGHDSTGVTDRVVNQMLTQMDGAEGLDGVYVLAATSRPDLIDSALLRPGRLDKSVICDMPDFDDRLDILQSVTRNMNVSKSVNLSSVAGECSGFSGADLQALAYNAYLKAVHEKLTKDESMAMAGEMDDNDDKKRMVECFQFSGNTEKKSLIELKPSDRATVIKKLEHLYQGNGNHAEGETKSKLATTAANSVIITSKDFEDSLSETKQSISQSEKRKLEAIYQQFISGRDGNMPDGTASNEIGARSTLM.

Disordered stretches follow at residues 187-221 (SISS…NNGE) and 1135-1157 (SGRD…STLM). Low complexity predominate over residues 205–217 (SSTSTATGRRSVT).

Belongs to the AAA ATPase family. As to quaternary structure, interacts with PEX6; forming the PEX1-PEX6 AAA ATPase complex, which is composed of a heterohexamer formed by a trimer of PEX1-PEX6 dimers.

It localises to the membrane. It carries out the reaction ATP + H2O = ADP + phosphate + H(+). Component of the PEX1-PEX6 AAA ATPase complex involved in peroxisome biosynthesis. The complex acts as a protein dislocase complex that mediates the ATP-dependent extraction of the PEX5 receptor from peroxisomal membranes, an essential step for PEX5 recycling. Specifically recognizes PEX5 monoubiquitinated at 'Cys-6', and pulls it out of the peroxisome lumen through the PEX2-PEX10-PEX12 retrotranslocation channel. Extraction by the PEX1-PEX6 AAA ATPase complex is accompanied by unfolding of the TPR repeats and release of bound cargo from PEX5. This Komagataella pastoris (Yeast) protein is Peroxisomal ATPase PEX1.